A 316-amino-acid chain; its full sequence is tRNA dimethylallyltransferase (316 aa).

ATP is bound at residue G17–T24. Position 19–24 (T19–T24) interacts with substrate. 3 interaction with substrate tRNA regions span residues D42–L45, Q166–R170, and R247–R252.

This sequence belongs to the IPP transferase family. Monomer. It depends on Mg(2+) as a cofactor.

The catalysed reaction is adenosine(37) in tRNA + dimethylallyl diphosphate = N(6)-dimethylallyladenosine(37) in tRNA + diphosphate. Functionally, catalyzes the transfer of a dimethylallyl group onto the adenine at position 37 in tRNAs that read codons beginning with uridine, leading to the formation of N6-(dimethylallyl)adenosine (i(6)A). The polypeptide is tRNA dimethylallyltransferase (Erwinia tasmaniensis (strain DSM 17950 / CFBP 7177 / CIP 109463 / NCPPB 4357 / Et1/99)).